The sequence spans 192 residues: Ion-translocating oxidoreductase complex subunit B (192 aa).

Residues 1–26 (MSAVWIAVIAISLLGLIFGLILGYAS) form a hydrophobic region. The region spanning 32-91 (QDDPVVEKIDELLPQSQCGQCGYPGCRPYAEAVGAQGEKINRCAPGGEAVMLKIAALLNV) is the 4Fe-4S domain. 12 residues coordinate [4Fe-4S] cluster: Cys-49, Cys-52, Cys-57, Cys-74, Cys-117, Cys-120, Cys-123, Cys-127, Cys-147, Cys-150, Cys-153, and Cys-157. 4Fe-4S ferredoxin-type domains lie at 108 to 137 (MLAV…GATR) and 138 to 167 (AMHT…LVPV).

The protein belongs to the 4Fe4S bacterial-type ferredoxin family. RnfB subfamily. The complex is composed of six subunits: RnfA, RnfB, RnfC, RnfD, RnfE and RnfG. [4Fe-4S] cluster serves as cofactor.

It is found in the cell inner membrane. Part of a membrane-bound complex that couples electron transfer with translocation of ions across the membrane. The polypeptide is Ion-translocating oxidoreductase complex subunit B (Klebsiella pneumoniae (strain 342)).